A 180-amino-acid polypeptide reads, in one-letter code: Large ribosomal subunit protein uL18m (180 aa).

Belongs to the universal ribosomal protein uL18 family. As to quaternary structure, component of the mitochondrial ribosome large subunit (39S) which comprises a 16S rRNA and about 50 distinct proteins.

Its subcellular location is the mitochondrion. Together with thiosulfate sulfurtransferase (TST), acts as a mitochondrial import factor for the cytosolic 5S rRNA. The precursor form shows RNA chaperone activity; is able to fold the 5S rRNA into an import-competent conformation that is recognized by rhodanese (TST). Both the cytoplasmic and mitochondrial forms are able to bind to the helix IV-loop D in the gamma domain of the 5S rRNA. The polypeptide is Large ribosomal subunit protein uL18m (MRPL18) (Bos taurus (Bovine)).